A 115-amino-acid polypeptide reads, in one-letter code: uncharacterized protein (115 aa).

One can recognise an MSP domain in the interval Met1–Glu115.

This is an uncharacterized protein from Caenorhabditis elegans.